The sequence spans 294 residues: tRNA dimethylallyltransferase (294 aa).

ATP is bound at residue 10–17 (GPTAVGKT). Residue 12-17 (TAVGKT) coordinates substrate. Residues 35 to 38 (DSQQ) are interaction with substrate tRNA.

This sequence belongs to the IPP transferase family. Monomer. Mg(2+) serves as cofactor.

It catalyses the reaction adenosine(37) in tRNA + dimethylallyl diphosphate = N(6)-dimethylallyladenosine(37) in tRNA + diphosphate. Catalyzes the transfer of a dimethylallyl group onto the adenine at position 37 in tRNAs that read codons beginning with uridine, leading to the formation of N6-(dimethylallyl)adenosine (i(6)A). This Streptococcus pneumoniae (strain P1031) protein is tRNA dimethylallyltransferase.